The sequence spans 247 residues: MRRKLAAGNWKMNGLRAALAEAEAITAAAAADGPEVLLCPPATLLAPMAAQAEGTALQIGGQYCHPAPSGAHTGHVSAPMLRDAGASYVIVGHSERRQDDGERDADVRAQTLAAWQAGLTAIVCVGETEAERDAANTLAIIGGQLAGSIPDTATGANLVVAYEPVWAIGTGRVPSVDQIGEVHDFIRARLEQRFGEGVGRSVRLLYGGSVKPGIAAEIFAVSNVDGALVGGASLKAADFTGIIAALG.

Residue 9-11 (NWK) coordinates substrate. Catalysis depends on histidine 93, which acts as the Electrophile. The Proton acceptor role is filled by glutamate 163. Residues glycine 169, serine 209, and 230–231 (GG) each bind substrate.

Belongs to the triosephosphate isomerase family. In terms of assembly, homodimer.

The protein resides in the cytoplasm. It catalyses the reaction D-glyceraldehyde 3-phosphate = dihydroxyacetone phosphate. The protein operates within carbohydrate biosynthesis; gluconeogenesis. It functions in the pathway carbohydrate degradation; glycolysis; D-glyceraldehyde 3-phosphate from glycerone phosphate: step 1/1. In terms of biological role, involved in the gluconeogenesis. Catalyzes stereospecifically the conversion of dihydroxyacetone phosphate (DHAP) to D-glyceraldehyde-3-phosphate (G3P). The sequence is that of Triosephosphate isomerase from Dinoroseobacter shibae (strain DSM 16493 / NCIMB 14021 / DFL 12).